Here is a 216-residue protein sequence, read N- to C-terminus: Probable nicotinate-nucleotide adenylyltransferase (216 aa).

Belongs to the NadD family.

The catalysed reaction is nicotinate beta-D-ribonucleotide + ATP + H(+) = deamido-NAD(+) + diphosphate. Its pathway is cofactor biosynthesis; NAD(+) biosynthesis; deamido-NAD(+) from nicotinate D-ribonucleotide: step 1/1. Functionally, catalyzes the reversible adenylation of nicotinate mononucleotide (NaMN) to nicotinic acid adenine dinucleotide (NaAD). The polypeptide is Probable nicotinate-nucleotide adenylyltransferase (Geotalea uraniireducens (strain Rf4) (Geobacter uraniireducens)).